We begin with the raw amino-acid sequence, 815 residues long: Lon protease 2 (815 aa).

The region spanning 19-212 is the Lon N-terminal domain; sequence LPVLPLINTV…RLSVVLSQEI (194 aa). Residue 365 to 372 coordinates ATP; the sequence is GPPGVGKT. In terms of domain architecture, Lon proteolytic spans 601–782; that stretch reads RDEIGVATGM…DEVLPIAFVS (182 aa). Residues Ser-688 and Lys-731 contribute to the active site.

It belongs to the peptidase S16 family. In terms of assembly, homohexamer. Organized in a ring with a central cavity.

It localises to the cytoplasm. It carries out the reaction Hydrolysis of proteins in presence of ATP.. Functionally, ATP-dependent serine protease that mediates the selective degradation of mutant and abnormal proteins as well as certain short-lived regulatory proteins. Required for cellular homeostasis and for survival from DNA damage and developmental changes induced by stress. Degrades polypeptides processively to yield small peptide fragments that are 5 to 10 amino acids long. Binds to DNA in a double-stranded, site-specific manner. This chain is Lon protease 2, found in Herpetosiphon aurantiacus (strain ATCC 23779 / DSM 785 / 114-95).